Here is a 575-residue protein sequence, read N- to C-terminus: Probable cytochrome P450 514A1 (575 aa).

Residues 4–24 (IFTIILTITILVLSLILKDLL) form a helical membrane-spanning segment. C448 is a binding site for heme.

This sequence belongs to the cytochrome P450 family. It depends on heme as a cofactor.

It is found in the membrane. The sequence is that of Probable cytochrome P450 514A1 (cyp514A1) from Dictyostelium discoideum (Social amoeba).